The chain runs to 642 residues: Putative ankyrin repeat protein L91 (642 aa).

ANK repeat units lie at residues 42-76 (HFTK…VKNP), 85-118 (EGWT…NPNI), 153-186 (NGFT…NVDS), 190-224 (NGET…TLHK), 227-256 (NGFT…DVNA), 260-288 (EGKS…EINH), 292-322 (NDIN…NPNE), 326-360 (NKNA…NPNI), 365-397 (SRTI…NVNA), 401-434 (EGRT…NVNH), 438-470 (DGAH…DVNI), 475-514 (KKWT…NVNA), 518-550 (YGNN…NVNH), and 554-587 (NGDT…NPNI).

This is Putative ankyrin repeat protein L91 from Acanthamoeba polyphaga (Amoeba).